A 130-amino-acid chain; its full sequence is MAQVQYYGTGRRKSSVARVRLVPGDGRIIVNKHDIREYIPSEALIEMVKQPLVLTETLGSYDVLVNVHGGGFAGQAGAIRHGIARALLEVDPEFRAVLKRAGLLTRDARVKERKKYGLKGARRAPQFSKR.

This sequence belongs to the universal ribosomal protein uS9 family.

The polypeptide is Small ribosomal subunit protein uS9 (Geobacillus thermodenitrificans (strain NG80-2)).